The following is a 430-amino-acid chain: Probable WRKY transcription factor 14 (430 aa).

Residues 211–277 constitute a DNA-binding region (WRKY); that stretch reads SGEVVPSDLW…YTSEHNHPWP (67 aa). The segment at 283 to 366 is disordered; sequence LAGSTRSSTS…APYRPELHDH (84 aa). The segment covering 286-306 has biased composition (low complexity); that stretch reads STRSSTSSSSNPNPSKPSTAN. Residues 307–319 show a composition bias toward polar residues; it reads VNSSSIGSQNTIY. Over residues 340-354 the composition is skewed to acidic residues; the sequence is GDDMELENVDDDDDN.

This sequence belongs to the WRKY group II-e family.

Its subcellular location is the nucleus. Its function is as follows. Transcription factor. Interacts specifically with the W box (5'-(T)TGAC[CT]-3'), a frequently occurring elicitor-responsive cis-acting element. The protein is Probable WRKY transcription factor 14 (WRKY14) of Arabidopsis thaliana (Mouse-ear cress).